Reading from the N-terminus, the 463-residue chain is Ataxin-10 homolog (463 aa).

It belongs to the ataxin-10 family.

It localises to the cytoplasm. Its function is as follows. May play a role in the regulation of cytokinesis. The chain is Ataxin-10 homolog (CTR86) from Candida albicans (strain SC5314 / ATCC MYA-2876) (Yeast).